We begin with the raw amino-acid sequence, 894 residues long: RNA polymerase I-specific transcription initiation factor RRN6 (894 aa).

Positions 803-894 (PPFNLNSQSQ…KKKKRIRGFG (92 aa)) are disordered. Polar residues-rich tracts occupy residues 806–823 (NLNS…QSSG), 832–849 (KTQS…QNLS), and 863–880 (QPPS…PRNS). Residues 881–894 (QKAKKKKKRIRGFG) are compositionally biased toward basic residues.

Component of the core factor (CF) complex, which consists of RRN6, RRN7 and RRN11. The CF heterotrimer may further dimerize to form a hexamer. RRN6 interacts with RRN7, RRN11 and RRN9.

It is found in the cytoplasm. The protein localises to the nucleus. It localises to the nucleolus. Its function is as follows. Acts as a component of the core factor (CF) complex which is essential for the initiation of rDNA transcription by RNA polymerase I. After binding of UAF (upstream activation factor) to an upstream element of the promoter, CF is recruited in a SPT15/TBP-dependent manner to form a preinitiation complex. The protein is RNA polymerase I-specific transcription initiation factor RRN6 (RRN6) of Saccharomyces cerevisiae (strain ATCC 204508 / S288c) (Baker's yeast).